The chain runs to 857 residues: Bifunctional uridylyltransferase/uridylyl-removing enzyme (857 aa).

The segment at 1–322 is uridylyltransferase; sequence MDTTPELLLC…FPSESMVTRE (322 aa). Residues 323-679 are uridylyl-removing; it reads INDRFVERQG…ARISPAGEGL (357 aa). The 123-residue stretch at 441 to 563 folds into the HD domain; it reads VDQHILMVVR…VGNGRYLTAL (123 aa). 2 ACT domains span residues 680-760 and 788-857; these read QVAV…DPTQ and LLSV…ALAI.

It belongs to the GlnD family. Mg(2+) is required as a cofactor.

The catalysed reaction is [protein-PII]-L-tyrosine + UTP = [protein-PII]-uridylyl-L-tyrosine + diphosphate. It catalyses the reaction [protein-PII]-uridylyl-L-tyrosine + H2O = [protein-PII]-L-tyrosine + UMP + H(+). Uridylyltransferase (UTase) activity is inhibited by glutamine, while glutamine activates uridylyl-removing (UR) activity. Its function is as follows. Modifies, by uridylylation and deuridylylation, the PII regulatory proteins (GlnB and homologs), in response to the nitrogen status of the cell that GlnD senses through the glutamine level. Under low glutamine levels, catalyzes the conversion of the PII proteins and UTP to PII-UMP and PPi, while under higher glutamine levels, GlnD hydrolyzes PII-UMP to PII and UMP (deuridylylation). Thus, controls uridylylation state and activity of the PII proteins, and plays an important role in the regulation of nitrogen assimilation and metabolism. The sequence is that of Bifunctional uridylyltransferase/uridylyl-removing enzyme from Cupriavidus metallidurans (strain ATCC 43123 / DSM 2839 / NBRC 102507 / CH34) (Ralstonia metallidurans).